Consider the following 926-residue polypeptide: Alanine--tRNA ligase (926 aa).

Zn(2+)-binding residues include histidine 577, histidine 581, cysteine 680, and histidine 684.

This sequence belongs to the class-II aminoacyl-tRNA synthetase family. Zn(2+) is required as a cofactor.

The protein localises to the cytoplasm. It carries out the reaction tRNA(Ala) + L-alanine + ATP = L-alanyl-tRNA(Ala) + AMP + diphosphate. Catalyzes the attachment of alanine to tRNA(Ala) in a two-step reaction: alanine is first activated by ATP to form Ala-AMP and then transferred to the acceptor end of tRNA(Ala). Also edits incorrectly charged Ser-tRNA(Ala) and Gly-tRNA(Ala) via its editing domain. This Methylacidiphilum infernorum (isolate V4) (Methylokorus infernorum (strain V4)) protein is Alanine--tRNA ligase.